A 547-amino-acid polypeptide reads, in one-letter code: uncharacterized protein (547 aa).

Polar residues predominate over residues 1–18 (MEYHPSSQSPQVNPGMES). 2 disordered regions span residues 1–41 (MEYH…LQHP) and 80–165 (PSYP…VKRQ). Composition is skewed to low complexity over residues 19 to 29 (QQGGYTYTYQQ) and 83 to 94 (PQSSSAPSNNSY). Over residues 121–135 (VPSPSPIEMVPPSPP) the composition is skewed to pro residues. A compositionally biased stretch (polar residues) spans 136 to 160 (KTGSNNSAPVTGKTVQSGNALNNSG). Positions 174 to 201 (CLTCRKRRIKCDERKPICYNCIKSKRQC) form a DNA-binding region, zn(2)-C6 fungal-type.

The protein localises to the nucleus. This is an uncharacterized protein from Schizosaccharomyces pombe (strain 972 / ATCC 24843) (Fission yeast).